The sequence spans 1521 residues: Lysophospholipase NTE1 (1521 aa).

The Cytoplasmic portion of the chain corresponds to 1–50 (MDVVNSTARAAVTSATAVTAVTGTGDRHPNPLSSAVAAASDVANAHGSSS). The chain crosses the membrane as a helical span at residues 51–71 (WLGLFARVVLWLLQFVSMVLY). At 72 to 96 (YAIKLATISVPTLLYTLFSTSLTVT) the chain is on the lumenal side. A helical transmembrane segment spans residues 97 to 117 (MNATTLMLIVAAMIGAISWVV). Residues 118–1521 (RYRYLNMYSR…RTMAPRRASI (1404 aa)) lie on the Cytoplasmic side of the membrane. 3 disordered regions span residues 280-301 (HADE…PNYP), 315-372 (SVPN…SAHP), and 738-768 (HAMD…KVDD). Composition is skewed to polar residues over residues 316–334 (VPNT…NNLP) and 738–753 (HAMD…QRSP). A nucleoside 3',5'-cyclic phosphate-binding positions include 670 to 789 (PASP…GGLA) and 837 to 957 (RLTN…IASR). Residues 1217–1381 (LVLGGGGARG…VDNLTVSHMK (165 aa)) form the PNPLA domain. The GXGXXG motif lies at 1221-1226 (GGGARG). Positions 1248–1252 (GTSIG) match the GXSXG motif. Catalysis depends on serine 1250, which acts as the Nucleophile. Aspartate 1368 (proton acceptor) is an active-site residue. Residues 1368 to 1370 (DGG) carry the DGA/G motif.

Belongs to the NTE family.

The protein resides in the endoplasmic reticulum membrane. The enzyme catalyses a 1-acyl-sn-glycero-3-phosphocholine + H2O = sn-glycerol 3-phosphocholine + a fatty acid + H(+). With respect to regulation, inhibited by organophosphorus esters. Intracellular phospholipase B that catalyzes the double deacylation of phosphatidylcholine (PC) to glycerophosphocholine (GroPCho). Plays an important role in membrane lipid homeostasis. Responsible for the rapid PC turnover in response to inositol, elevated temperatures, or when choline is present in the growth medium. The polypeptide is Lysophospholipase NTE1 (NTE1) (Chaetomium globosum (strain ATCC 6205 / CBS 148.51 / DSM 1962 / NBRC 6347 / NRRL 1970) (Soil fungus)).